The sequence spans 194 residues: Mediator of RNA polymerase II transcription subunit 8 (194 aa).

The protein belongs to the Mediator complex subunit 8 family. In terms of assembly, component of the Mediator complex.

It is found in the nucleus. Functionally, component of the Mediator complex, a coactivator involved in the regulated transcription of nearly all RNA polymerase II-dependent genes. Mediator functions as a bridge to convey information from gene-specific regulatory proteins to the basal RNA polymerase II transcription machinery. Mediator is recruited to promoters by direct interactions with regulatory proteins and serves as a scaffold for the assembly of a functional preinitiation complex with RNA polymerase II and the general transcription factors. This Yarrowia lipolytica (strain CLIB 122 / E 150) (Yeast) protein is Mediator of RNA polymerase II transcription subunit 8 (MED8).